The chain runs to 75 residues: Dermaseptin-related peptide (75 aa).

The signal sequence occupies residues 1–22 (MAFLNKSLLLVLFLGLVSLSIC). The propeptide occupies 23-43 (EEERRENEDEEEQEDDEQSEM). Residues 24–44 (EERRENEDEEEQEDDEQSEMR) are disordered. The segment covering 30–40 (EDEEEQEDDEQ) has biased composition (acidic residues). The residue at position 72 (Q72) is a Glutamine amide. A propeptide spanning residues 74–75 (EQ) is cleaved from the precursor.

As to expression, expressed by the skin glands.

It localises to the secreted. In terms of biological role, has antibacterial activity against Gram-positive bacterium M.luteus NCT C2665 but not against Gram-negative bacterium E.coli K12D31. The chain is Dermaseptin-related peptide from Agalychnis callidryas (Red-eyed tree frog).